The primary structure comprises 167 residues: I-Kappa-B like protein F2 (167 aa).

ANK repeat units lie at residues 54 to 86 (HGKQ…DING), 91 to 121 (FGNT…NMGI), and 125 to 154 (LFKT…RCGV).

Belongs to the polydnaviridae I-Kappa-B-like protein family.

Functionally, suppresses the host immune response through NF-kappa-B inactivation. Possesses ankyrin repeat domains required for NF-kappa-B binding but lacks the regulatory regions required for dissociation from NF-kappa-B and degradation. Therefore, prevents host NF-kappa-B release and subsequent activation. The polypeptide is I-Kappa-B like protein F2 (F3) (Microplitis demolitor bracovirus (isolate Webb) (MdBV)).